The sequence spans 120 residues: Large ribosomal subunit protein bL19c (120 aa).

This sequence belongs to the bacterial ribosomal protein bL19 family.

The protein localises to the plastid. It is found in the chloroplast. In Phaeodactylum tricornutum (strain CCAP 1055/1), this protein is Large ribosomal subunit protein bL19c.